We begin with the raw amino-acid sequence, 304 residues long: Ornithine carbamoyltransferase (304 aa).

Carbamoyl phosphate is bound by residues 51 to 54 (STRT), Gln78, Arg102, and 129 to 132 (HPVQ). Residues Asn157, Asp221, and 225 to 226 (SM) contribute to the L-ornithine site. Residues 261 to 262 (CL) and Arg289 each bind carbamoyl phosphate.

The protein belongs to the aspartate/ornithine carbamoyltransferase superfamily. OTCase family.

It localises to the cytoplasm. The enzyme catalyses carbamoyl phosphate + L-ornithine = L-citrulline + phosphate + H(+). Its pathway is amino-acid degradation; L-arginine degradation via ADI pathway; carbamoyl phosphate from L-arginine: step 2/2. In terms of biological role, reversibly catalyzes the transfer of the carbamoyl group from carbamoyl phosphate (CP) to the N(epsilon) atom of ornithine (ORN) to produce L-citrulline. This Campylobacter curvus (strain 525.92) protein is Ornithine carbamoyltransferase.